The sequence spans 113 residues: Putative single-stranded DNA-binding protein ycf41 (113 aa).

Positions 1-101 (MNYASFIIKI…EVSGFKIYPF (101 aa)) constitute an SSB domain.

It localises to the plastid. The protein resides in the chloroplast. This chain is Putative single-stranded DNA-binding protein ycf41 (ycf41), found in Trieres chinensis (Marine centric diatom).